The sequence spans 31 residues: Ice-structuring glycoprotein 3 (31 aa).

10 O-linked (GalNAc...) threonine glycosylation sites follow: threonine 3, threonine 6, threonine 9, threonine 12, threonine 15, threonine 18, threonine 21, threonine 24, threonine 27, and threonine 30.

Post-translationally, O-linked glycans consist of Gal-GalNAc disaccharides. The three proteins may differ only in the number of repeating units of -Ala-Ala-Thr-.

The protein localises to the secreted. Antifreeze proteins lower the blood freezing point. This fish lives in antarctic waters where it experiences water temperatures near -1.9 degrees Celsius. Its blood has a freezing point of about -2.0 degrees Celsius, and 30% of the freezing-point depression is due mainly to the 3 major high molecular weight glycoproteins in the plasma. The polypeptide is Ice-structuring glycoprotein 3 (Pagothenia borchgrevinki (Bald rockcod)).